A 366-amino-acid polypeptide reads, in one-letter code: Alanine racemase (366 aa).

Lysine 40 (proton acceptor; specific for D-alanine) is an active-site residue. At lysine 40 the chain carries N6-(pyridoxal phosphate)lysine. Arginine 136 serves as a coordination point for substrate. Catalysis depends on tyrosine 263, which acts as the Proton acceptor; specific for L-alanine. Methionine 310 contacts substrate.

This sequence belongs to the alanine racemase family. Requires pyridoxal 5'-phosphate as cofactor.

It catalyses the reaction L-alanine = D-alanine. Its pathway is amino-acid biosynthesis; D-alanine biosynthesis; D-alanine from L-alanine: step 1/1. In terms of biological role, catalyzes the interconversion of L-alanine and D-alanine. May also act on other amino acids. The chain is Alanine racemase (alr) from Streptococcus agalactiae serotype Ia (strain ATCC 27591 / A909 / CDC SS700).